The sequence spans 366 residues: MSHNTFGHLFRVTTFGESHGVALGCVVDGCPPGLPLEAEEIQAELDRRKPGQSRFTTQRREPDQVKILSGVFADDRTGGRQLTTGTPIALMIENTDQRSKDYSEIRDSYRPGHADYTYDVKYGIRDYRGGGRSSARETAARVAAGAVARKVIPGVTIRAALVQMGPHAIDRSRWDWDAVGNNPFFCPDAERASFYETYLDGLRKDGSSVGAVIEVVAEGVPPGLGAPVYGKLDADLAAAMMSINAVKGVEIGDGFAAATLRGEDNADEMRAGNGGRPRFLANHAGGILGGISNGEPVVVRFAVKPTSSILTPRRSVTRDGAEVDLVTKGRHDPCVGIRAVPVAEAMMACVLADHYLRHRGQTAGGG.

The NADP(+) site is built by Arg48 and Arg54. Residues 132 to 134 (RSS), 244 to 245 (NA), Gly289, 304 to 308 (KPTSS), and Arg330 each bind FMN.

Belongs to the chorismate synthase family. Homotetramer. The cofactor is FMNH2.

The catalysed reaction is 5-O-(1-carboxyvinyl)-3-phosphoshikimate = chorismate + phosphate. It participates in metabolic intermediate biosynthesis; chorismate biosynthesis; chorismate from D-erythrose 4-phosphate and phosphoenolpyruvate: step 7/7. Its function is as follows. Catalyzes the anti-1,4-elimination of the C-3 phosphate and the C-6 proR hydrogen from 5-enolpyruvylshikimate-3-phosphate (EPSP) to yield chorismate, which is the branch point compound that serves as the starting substrate for the three terminal pathways of aromatic amino acid biosynthesis. This reaction introduces a second double bond into the aromatic ring system. The polypeptide is Chorismate synthase (Methylobacterium radiotolerans (strain ATCC 27329 / DSM 1819 / JCM 2831 / NBRC 15690 / NCIMB 10815 / 0-1)).